Here is a 608-residue protein sequence, read N- to C-terminus: Albumin (608 aa).

The first 18 residues, 1-18 (MKWVTFLLLLFISGSAFS), serve as a signal peptide directing secretion. A propeptide spanning residues 19–24 (RGVFRR) is cleaved from the precursor. 3 consecutive Albumin domains span residues 19–211 (RGVF…AVKE), 212–403 (KALV…EFQP), and 404–601 (LVEE…NLVA). His27 provides a ligand contact to Cu cation. Residue Ser29 is modified to Phosphoserine. Glu30 and Asp37 together coordinate Ca(2+). Cys77 and Cys86 are oxidised to a cystine. Ser89 carries the post-translational modification Phosphoserine. Zn(2+) is bound at residue His91. 6 cysteine pairs are disulfide-bonded: Cys99-Cys115, Cys114-Cys125, Cys148-Cys193, Cys192-Cys201, Cys224-Cys270, and Cys269-Cys277. Glu268 is a binding site for Ca(2+). Residues His271 and Asp273 each contribute to the Zn(2+) site. The Ca(2+) site is built by Asp273, Glu276, and Asp279. 8 disulfide bridges follow: Cys289/Cys303, Cys302/Cys313, Cys340/Cys385, Cys384/Cys393, Cys416/Cys462, Cys461/Cys472, Cys485/Cys501, and Cys500/Cys511. Ser297 is subject to Phosphoserine. Ser443 is subject to Phosphoserine. Phosphothreonine is present on residues Thr444 and Thr446. The residue at position 460 (Lys460) is an N6-succinyllysine. Position 513 is a phosphoserine (Ser513). 2 cysteine pairs are disulfide-bonded: Cys538–Cys583 and Cys582–Cys591. Position 543 is an N6-succinyllysine (Lys543). An N6-methyllysine modification is found at Lys558. Thr570 carries the post-translational modification Phosphothreonine. Residue Lys588 is modified to N6-succinyllysine.

Belongs to the ALB/AFP/VDB family. Interacts with FCGRT; this interaction regulates ALB homeostasis. Interacts with TASOR. In plasma, occurs in a covalently-linked complex with chromophore-bound alpha-1-microglobulin; this interaction does not prevent fatty acid binding to ALB. In terms of processing, phosphorylated by FAM20C in the extracellular medium. In terms of tissue distribution, plasma.

Its subcellular location is the secreted. In terms of biological role, binds water, Ca(2+), Na(+), K(+), fatty acids, hormones, bilirubin and drugs. Its main function is the regulation of the colloidal osmotic pressure of blood. Major zinc transporter in plasma, typically binds about 80% of all plasma zinc. Major calcium and magnesium transporter in plasma, binds approximately 45% of circulating calcium and magnesium in plasma. Potentially has more than two calcium-binding sites and might additionally bind calcium in a non-specific manner. The shared binding site between zinc and calcium at residue Asp-273 suggests a crosstalk between zinc and calcium transport in the blood. The rank order of affinity is zinc &gt; calcium &gt; magnesium. Binds to the bacterial siderophore enterobactin and inhibits enterobactin-mediated iron uptake of E.coli from ferric transferrin, and may thereby limit the utilization of iron and growth of enteric bacteria such as E.coli. Does not prevent iron uptake by the bacterial siderophore aerobactin. The protein is Albumin (Alb) of Rattus norvegicus (Rat).